Reading from the N-terminus, the 241-residue chain is Ribosomal RNA small subunit methyltransferase G (241 aa).

S-adenosyl-L-methionine-binding positions include Gly-79, Phe-84, 130-131, and Arg-150; that span reads AE.

The protein belongs to the methyltransferase superfamily. RNA methyltransferase RsmG family.

Its subcellular location is the cytoplasm. Specifically methylates the N7 position of a guanine in 16S rRNA. This is Ribosomal RNA small subunit methyltransferase G from Limosilactobacillus reuteri (strain DSM 20016) (Lactobacillus reuteri).